The following is a 108-amino-acid chain: Large ribosomal subunit protein uL23 (108 aa).

It belongs to the universal ribosomal protein uL23 family. Part of the 50S ribosomal subunit. Contacts protein L29, and trigger factor when it is bound to the ribosome.

Functionally, one of the early assembly proteins it binds 23S rRNA. One of the proteins that surrounds the polypeptide exit tunnel on the outside of the ribosome. Forms the main docking site for trigger factor binding to the ribosome. The sequence is that of Large ribosomal subunit protein uL23 from Albidiferax ferrireducens (strain ATCC BAA-621 / DSM 15236 / T118) (Rhodoferax ferrireducens).